A 198-amino-acid polypeptide reads, in one-letter code: Coagulation factor XIII A chain (198 aa).

Residues 1 to 36 are disordered; that stretch reads MSESSGTAFGGRRAIPPNTSNAAENDPPTVELQGLV. An N-acetylserine modification is found at S2. Positions 2–38 are cleaved as a propeptide — activation peptide; that stretch reads SESSGTAFGGRRAIPPNTSNAAENDPPTVELQGLVPR.

It belongs to the transglutaminase superfamily. Transglutaminase family. In terms of assembly, tetramer of two A chains (F13A1) and two B (F13B) chains. Requires Ca(2+) as cofactor. The activation peptide is released by thrombin.

The protein resides in the cytoplasm. Its subcellular location is the secreted. It carries out the reaction L-glutaminyl-[protein] + L-lysyl-[protein] = [protein]-L-lysyl-N(6)-5-L-glutamyl-[protein] + NH4(+). Its function is as follows. Factor XIII is activated by thrombin and calcium ion to a transglutaminase that catalyzes the formation of gamma-glutamyl-epsilon-lysine cross-links between fibrin chains, thus stabilizing the fibrin clot. Also cross-link alpha-2-plasmin inhibitor, or fibronectin, to the alpha chains of fibrin. The protein is Coagulation factor XIII A chain (F13A1) of Bos taurus (Bovine).